Reading from the N-terminus, the 314-residue chain is DNA-directed RNA polymerase subunit alpha (314 aa).

Positions 1 to 228 (MIEIEKPKIE…EHLNIFVGLT (228 aa)) are alpha N-terminal domain (alpha-NTD). Positions 245–314 (KEKVMEMTIE…DLGLGLRDDD (70 aa)) are alpha C-terminal domain (alpha-CTD).

The protein belongs to the RNA polymerase alpha chain family. Homodimer. The RNAP catalytic core consists of 2 alpha, 1 beta, 1 beta' and 1 omega subunit. When a sigma factor is associated with the core the holoenzyme is formed, which can initiate transcription.

It carries out the reaction RNA(n) + a ribonucleoside 5'-triphosphate = RNA(n+1) + diphosphate. In terms of biological role, DNA-dependent RNA polymerase catalyzes the transcription of DNA into RNA using the four ribonucleoside triphosphates as substrates. This is DNA-directed RNA polymerase subunit alpha from Oceanobacillus iheyensis (strain DSM 14371 / CIP 107618 / JCM 11309 / KCTC 3954 / HTE831).